We begin with the raw amino-acid sequence, 303 residues long: Ornithine carbamoyltransferase (303 aa).

Residues 53–56 (STRT), glutamine 80, arginine 104, and 131–134 (HPCQ) contribute to the carbamoyl phosphate site. L-ornithine contacts are provided by residues asparagine 162, aspartate 222, and 226–227 (SM). Carbamoyl phosphate-binding positions include 261–262 (CL) and arginine 289.

This sequence belongs to the aspartate/ornithine carbamoyltransferase superfamily. OTCase family.

Its subcellular location is the cytoplasm. It carries out the reaction carbamoyl phosphate + L-ornithine = L-citrulline + phosphate + H(+). It functions in the pathway amino-acid biosynthesis; L-arginine biosynthesis; L-arginine from L-ornithine and carbamoyl phosphate: step 1/3. Reversibly catalyzes the transfer of the carbamoyl group from carbamoyl phosphate (CP) to the N(epsilon) atom of ornithine (ORN) to produce L-citrulline. The chain is Ornithine carbamoyltransferase from Mesorhizobium japonicum (strain LMG 29417 / CECT 9101 / MAFF 303099) (Mesorhizobium loti (strain MAFF 303099)).